The chain runs to 1257 residues: Elongation factor 2 (1257 aa).

In terms of domain architecture, DOD-type homing endonuclease spans 273–402; sequence LAGLMFGDGC…LQLLLQKFDV (130 aa). Positions 541 to 782 constitute a tr-type G domain; sequence VEEHHNFAAE…MVVKHLPDPV (242 aa). Residues 616–620 and 670–673 contribute to the GTP site; these read DTPGH and NKVD. Diphthamide is present on H1120. Over residues 1237–1250 the composition is skewed to basic and acidic residues; that stretch reads ERKGLKPEPPKPED. The interval 1237-1257 is disordered; sequence ERKGLKPEPPKPEDYIEDYGG.

This sequence belongs to the TRAFAC class translation factor GTPase superfamily. Classic translation factor GTPase family. EF-G/EF-2 subfamily. This protein undergoes a protein self splicing that involves a post-translational excision of the intervening region (intein) followed by peptide ligation.

It localises to the cytoplasm. Catalyzes the GTP-dependent ribosomal translocation step during translation elongation. During this step, the ribosome changes from the pre-translocational (PRE) to the post-translocational (POST) state as the newly formed A-site-bound peptidyl-tRNA and P-site-bound deacylated tRNA move to the P and E sites, respectively. Catalyzes the coordinated movement of the two tRNA molecules, the mRNA and conformational changes in the ribosome. The chain is Elongation factor 2 from Methanopyrus kandleri (strain AV19 / DSM 6324 / JCM 9639 / NBRC 100938).